The following is a 216-amino-acid chain: uncharacterized protein (216 aa).

This is an uncharacterized protein from Archaeoglobus fulgidus (strain ATCC 49558 / DSM 4304 / JCM 9628 / NBRC 100126 / VC-16).